The primary structure comprises 146 residues: Hemoglobin subunit beta (146 aa).

In terms of domain architecture, Globin spans 2–146 (EWTQQERSII…VVFALGRKYH (145 aa)). Positions 63 and 92 each coordinate heme b.

Belongs to the globin family. Heterotetramer of two alpha chains and two beta chains. In terms of tissue distribution, red blood cells.

In terms of biological role, involved in oxygen transport from gills to the various peripheral tissues. The chain is Hemoglobin subunit beta (hbb) from Thunnus thynnus (Atlantic bluefin tuna).